A 171-amino-acid chain; its full sequence is S-ribosylhomocysteine lyase (171 aa).

Positions 54, 58, and 128 each coordinate Fe cation.

It belongs to the LuxS family. In terms of assembly, homodimer. It depends on Fe cation as a cofactor.

It catalyses the reaction S-(5-deoxy-D-ribos-5-yl)-L-homocysteine = (S)-4,5-dihydroxypentane-2,3-dione + L-homocysteine. Its function is as follows. Involved in the synthesis of autoinducer 2 (AI-2) which is secreted by bacteria and is used to communicate both the cell density and the metabolic potential of the environment. The regulation of gene expression in response to changes in cell density is called quorum sensing. Catalyzes the transformation of S-ribosylhomocysteine (RHC) to homocysteine (HC) and 4,5-dihydroxy-2,3-pentadione (DPD). The chain is S-ribosylhomocysteine lyase from Pectobacterium atrosepticum (strain SCRI 1043 / ATCC BAA-672) (Erwinia carotovora subsp. atroseptica).